Reading from the N-terminus, the 751-residue chain is Centrosomal protein of 68 kDa (751 aa).

Basic and acidic residues-rich tracts occupy residues 1–17 (MALG…EDTK) and 86–96 (ASREPVAERSE). The interval 1 to 253 (MALGEEKAEA…PQPVFSGGDA (253 aa)) is disordered. 2 stretches are compositionally biased toward polar residues: residues 131 to 144 (LPQT…TTIC) and 163 to 175 (APSS…SQWK). Low complexity predominate over residues 176-200 (SMPSPGSAAPQPSSCSVSASSTGSS). Residue S326 is modified to Phosphoserine. Positions 339 to 348 (STLKSPTNVF) are enriched in polar residues. 3 disordered regions span residues 339-474 (STLK…ESDD), 511-545 (SPLE…SGDP), and 590-611 (RLDR…KGGE). Composition is skewed to basic and acidic residues over residues 399–416 (GSRD…RGAK) and 433–450 (RTRD…EKRT). Residues 451–461 (SQSARRPTCTE) are compositionally biased toward polar residues. Residues S466 and S472 each carry the phosphoserine modification. The span at 520-537 (GPASLPSSSSQSQLPPGA) shows a compositional bias: low complexity.

As to quaternary structure, interacts with CNTLN; the interaction recruits CEP68 to the centrosome. Interacts with the SCF(FBXW11) complex which contains SKP1, CUL1 and FBXW11; the interaction is probably mediated by FBXW11 and the complex also contains CDK5RAP2 and PCNT. Also interacts with F-box protein BTRC. Interacts with serine/threonine-protein kinase PLK1; the interaction leads to phosphorylation of CEP68 and its subsequent degradation. Interacts with NEK2; the interaction leads to phosphorylation of CEP68. Phosphorylation by PLK1 is required for binding to BTRC in prometaphase. Phosphorylated directly or indirectly by NEK2. NEK2-mediated phosphorylation promotes CEP68 dissociation from the centrosome and its degradation at the onset of mitosis. In terms of processing, ubiquitinated and targeted for proteasomal degradation in early mitosis by the SCF(BTRC) and/or SCF(FBXW11) E3 ubiquitin-protein ligase complexes. Degradation is complete by prometaphase and is required for removal of CDK5RAP2 from the peripheral pericentriolar material and subsequent centriole separation.

The protein resides in the cytoplasm. It is found in the cytoskeleton. The protein localises to the microtubule organizing center. It localises to the centrosome. Its function is as follows. Involved in maintenance of centrosome cohesion, probably as part of a linker structure which prevents centrosome splitting. Required for localization of CDK5RAP2 to the centrosome during interphase. Contributes to CROCC/rootletin filament formation. This chain is Centrosomal protein of 68 kDa (CEP68), found in Pongo abelii (Sumatran orangutan).